We begin with the raw amino-acid sequence, 929 residues long: Alanine--tRNA ligase (929 aa).

Zn(2+)-binding residues include His-619, His-623, Cys-722, and His-726.

It belongs to the class-II aminoacyl-tRNA synthetase family. Zn(2+) is required as a cofactor.

It localises to the cytoplasm. It catalyses the reaction tRNA(Ala) + L-alanine + ATP = L-alanyl-tRNA(Ala) + AMP + diphosphate. Its function is as follows. Catalyzes the attachment of alanine to tRNA(Ala) in a two-step reaction: alanine is first activated by ATP to form Ala-AMP and then transferred to the acceptor end of tRNA(Ala). Also edits incorrectly charged Ser-tRNA(Ala) and Gly-tRNA(Ala) via its editing domain. In Halobacterium salinarum (strain ATCC 29341 / DSM 671 / R1), this protein is Alanine--tRNA ligase.